Reading from the N-terminus, the 285-residue chain is uncharacterized protein (285 aa).

This is an uncharacterized protein from Borreliella burgdorferi (strain ATCC 35210 / DSM 4680 / CIP 102532 / B31) (Borrelia burgdorferi).